A 576-amino-acid polypeptide reads, in one-letter code: RING finger and SPRY domain-containing protein 1 (576 aa).

Residues 1-16 (MIVLGWAVFLASRSLG) form the signal peptide. The residue at position 50 (S50) is a Phosphoserine. Positions 50 to 99 (SGTDDSVDTQQQQAENSAVPTADTRSQPRDPVRPPRRGRGPHEPRRKKQN) are disordered. Positions 57-68 (DTQQQQAENSAV) are enriched in polar residues. Over residues 83–97 (PPRRGRGPHEPRRKK) the composition is skewed to basic residues. The B30.2/SPRY domain maps to 300 to 483 (LFLKEGRQLT…CEFNFGAKPF (184 aa)). N-linked (GlcNAc...) asparagine glycosylation occurs at N314. Residues 527 to 562 (CSLCCDEVADTQLKPCGHSDLCMDCALQLETCPLCR) form an RING-type zinc finger.

It localises to the secreted. The protein is RING finger and SPRY domain-containing protein 1 (RSPRY1) of Macaca fascicularis (Crab-eating macaque).